A 222-amino-acid chain; its full sequence is Germin-like protein subfamily 1 member 5 (222 aa).

A signal peptide spans 1–24 (MKGLLHFLLAKIILLALASSFVYC). Cys-34 and Cys-50 are disulfide-bonded. N-linked (GlcNAc...) asparagine glycosylation is found at Asn-38 and Asn-71. Residues 64-215 (SGLNVPGNTS…AFALDFNKVK (152 aa)) form the Cupin type-1 domain. Residues His-112, His-114, and Glu-119 each contribute to the Mn(2+) site. N-linked (GlcNAc...) asparagine glycosylation is present at Asn-139. His-163 is a binding site for Mn(2+).

Belongs to the germin family. Oligomer (believed to be a pentamer but probably hexamer).

The protein localises to the secreted. It localises to the extracellular space. It is found in the apoplast. May play a role in plant defense. Probably has no oxalate oxidase activity even if the active site is conserved. In Arabidopsis thaliana (Mouse-ear cress), this protein is Germin-like protein subfamily 1 member 5.